Reading from the N-terminus, the 332-residue chain is uncharacterized protein (332 aa).

Residues 306-332 (EKNTSEVTEPKTGPSGTKDNYHLHSIF) form a disordered region.

This is an uncharacterized protein from Homo sapiens (Human).